The chain runs to 585 residues: tRNA-guanine(15) transglycosylase (585 aa).

The Nucleophile role is filled by aspartate 95. Aspartate 130 and alanine 196 together coordinate substrate. Zn(2+) contacts are provided by cysteine 279, cysteine 281, and cysteine 284. One can recognise a PUA domain in the interval 507–582 (VMRVVVNKEA…RAVKTRRGVE (76 aa)).

The protein belongs to the archaeosine tRNA-ribosyltransferase family. Requires Zn(2+) as cofactor.

It carries out the reaction guanosine(15) in tRNA + 7-cyano-7-deazaguanine = 7-cyano-7-carbaguanosine(15) in tRNA + guanine. Its pathway is tRNA modification; archaeosine-tRNA biosynthesis. Its function is as follows. Exchanges the guanine residue with 7-cyano-7-deazaguanine (preQ0) at position 15 in the dihydrouridine loop (D-loop) of archaeal tRNAs. This Pyrococcus furiosus (strain ATCC 43587 / DSM 3638 / JCM 8422 / Vc1) protein is tRNA-guanine(15) transglycosylase.